The chain runs to 130 residues: Small ribosomal subunit protein uS11c (130 aa).

Belongs to the universal ribosomal protein uS11 family. Part of the 30S ribosomal subunit.

Its subcellular location is the plastid. It is found in the chloroplast. The protein is Small ribosomal subunit protein uS11c of Guillardia theta (Cryptophyte).